The following is a 1085-amino-acid chain: Solute carrier family 12 member 4 (1085 aa).

Residues 1-119 lie on the Cytoplasmic side of the membrane; sequence MPHFTVVPVD…RRAAKAPSMG (119 aa). A phosphoserine mark is found at Ser24, Ser47, Ser51, Ser81, and Ser88. The segment at 32 to 56 is disordered; that stretch reads AEREDSDGQGNHRENSPFLSPLDAS. Residues 120–141 traverse the membrane as a discontinuously helical segment; sequence TLMGVYLPCLQNIFGVILFLRL. Asn131 and Ile132 together coordinate K(+). Residues 142–149 are Extracellular-facing; it reads TWMVGTAG. A helical membrane pass occupies residues 150-172; it reads VLQALLIVLICCCCTLLTAISMS. The Cytoplasmic portion of the chain corresponds to 173–196; that stretch reads AIATNGVVPAGGSYFMISRSLGPE. A helical membrane pass occupies residues 197–225; the sequence is FGGAVGLCFYLGTTFAAAMYILGAIEILL. Position 216 (Tyr216) interacts with K(+). The Extracellular segment spans residues 226-248; that stretch reads TYIAPPAAIFYPSGTHDMSSATL. A run of 2 helical transmembrane segments spans residues 249-271 and 272-297; these read NNMR…VGVK and YVNK…GGIK. Over 298-419 the chain is Extracellular; sequence SAFDPPVFPV…LYVVADIATS (122 aa). Cys308 and Cys323 are oxidised to a cystine. N-linked (GlcNAc...) asparagine glycosylation is found at Asn312, Asn331, and Asn347. A disulfide bridge links Cys343 with Cys353. A helical membrane pass occupies residues 420 to 440; it reads FTVLVGIFFPSVTGIMAGSNR. Residues Pro429 and Thr432 each coordinate K(+). Residues Gly433, Ile434, and Met435 each coordinate chloride. Topologically, residues 441-450 are cytoplasmic; it reads SGDLRDAQKS. A helical transmembrane segment spans residues 451 to 473; sequence IPVGTILAIVTTSLVYFSSVILF. The Extracellular segment spans residues 474–504; that stretch reads GACIEGVVLRDKYGDGVSRNLVVGTLAWPSP. The helical transmembrane segment at 505-531 threads the bilayer; that stretch reads WVIVVGSFFSTCGAGLQSLTGAPRLLQ. Residues 532–554 lie on the Cytoplasmic side of the membrane; sequence AIAKDNIIPFLRVFGHGKANGEP. A run of 2 helical transmembrane segments spans residues 555 to 575 and 576 to 598; these read TWAL…ASLD and MVAP…ACAV. Residue Tyr589 coordinates chloride. Over 599–612 the chain is Cytoplasmic; sequence QTLLRTPNWRPRFK. The next 2 membrane-spanning stretches (helical) occupy residues 613 to 635 and 636 to 651; these read YYHW…VSSW and YYAL…IYKY. The Cytoplasmic portion of the chain corresponds to 652–1085; it reads IEYQGAEKEW…GGREVITIYS (434 aa). The segment at 665–681 is scissor helix; sequence IRGLSLSAARYALLRLE. Positions 697, 699, 707, 708, and 730 each coordinate ATP. Ser734 is subject to Phosphoserine. Positions 794, 795, and 797 each coordinate ATP. Phosphoserine occurs at positions 916 and 967. Phosphothreonine is present on Thr983. Ser1050 is subject to Phosphoserine.

Belongs to the SLC12A transporter family. K/Cl co-transporter subfamily. As to quaternary structure, homodimer; adopts a domain-swap conformation at the scissor helices connecting the transmembrane domain and C-terminal domain. Heterodimer with other K-Cl cotransporters. N-glycosylated. In terms of processing, phosphorylated, phosphorylation may regulate transporter activity. Ubiquitous.

The protein resides in the cell membrane. The catalysed reaction is K(+)(in) + chloride(in) = K(+)(out) + chloride(out). Inhibited by WNK3. In terms of biological role, mediates electroneutral potassium-chloride cotransport when activated by cell swelling. May contribute to cell volume homeostasis in single cells. May be involved in the regulation of basolateral Cl(-) exit in NaCl absorbing epithelia. This is Solute carrier family 12 member 4 (Slc12a4) from Rattus norvegicus (Rat).